A 372-amino-acid chain; its full sequence is Protein REVEILLE 7 (372 aa).

Positions 71-125 (TVTKQREKWSEEEHDRFLEAIKLYGRGWRQIQEHIGTKTAVQIRSHAQKFFSKMA) constitute an HTH myb-type domain. The H-T-H motif DNA-binding region spans 98–121 (WRQIQEHIGTKTAVQIRSHAQKFF). The disordered stretch occupies residues 124-204 (MAQEADSRSE…RCSSPNSCTS (81 aa)). Residues 145 to 155 (RPKRKPAHPYP) show a composition bias toward basic residues. Over residues 156 to 169 (RKSPVPYTQSPPPN) the composition is skewed to pro residues. Positions 178–204 (KSPTSVLSSFGSEDQVNRCSSPNSCTS) are enriched in polar residues.

The protein resides in the nucleus. Its function is as follows. Transcription factor involved in phytochrome A-mediated cotyledon opening. Controlled by the central oscillator mediated by LHY and CCA1. Part of a regulatory circadian feedback loop. Regulates its own expression. The polypeptide is Protein REVEILLE 7 (RVE7) (Arabidopsis thaliana (Mouse-ear cress)).